The chain runs to 321 residues: GDP-L-fucose synthase (321 aa).

14-20 (GGSGLVG) is a binding site for NADP(+). The Proton donor/acceptor role is filled by Tyr-143. Residues Lys-147, 170-173 (PTNV), and His-186 each bind NADP(+). Residues Lys-194, Trp-208, Arg-215, and Asp-277 each contribute to the substrate site.

Belongs to the NAD(P)-dependent epimerase/dehydratase family. Fucose synthase subfamily. In terms of assembly, homodimer.

The catalysed reaction is GDP-beta-L-fucose + NADP(+) = GDP-4-dehydro-alpha-D-rhamnose + NADPH + H(+). Its pathway is nucleotide-sugar biosynthesis; GDP-L-fucose biosynthesis via de novo pathway; GDP-L-fucose from GDP-alpha-D-mannose: step 2/2. Its function is as follows. Catalyzes the two-step NADP-dependent conversion of GDP-4-dehydro-6-deoxy-D-mannose to GDP-fucose, involving an epimerase and a reductase reaction. The polypeptide is GDP-L-fucose synthase (Mus musculus (Mouse)).